The chain runs to 443 residues: Chromosomal replication initiator protein DnaA (443 aa).

The segment at 1–80 (MFLEEKLNLV…ETCGDKIPVE (80 aa)) is domain I, interacts with DnaA modulators. Residues 80–104 (EILIETKAASPLQSILEKSFDQKDF) are domain II. Positions 105 to 321 (QFNPDYTFET…GALNDIYLYK (217 aa)) are domain III, AAA+ region. ATP-binding residues include Gly-148, Gly-150, Lys-151, and Thr-152. The domain IV, binds dsDNA stretch occupies residues 322–443 (KSYSLLFLNL…ERISSKYKLQ (122 aa)).

It belongs to the DnaA family. As to quaternary structure, oligomerizes as a right-handed, spiral filament on DNA at oriC.

The protein resides in the cytoplasm. Functionally, plays an essential role in the initiation and regulation of chromosomal replication. ATP-DnaA binds to the origin of replication (oriC) to initiate formation of the DNA replication initiation complex once per cell cycle. Binds the DnaA box (a 9 base pair repeat at the origin) and separates the double-stranded (ds)DNA. Forms a right-handed helical filament on oriC DNA; dsDNA binds to the exterior of the filament while single-stranded (ss)DNA is stabiized in the filament's interior. The ATP-DnaA-oriC complex binds and stabilizes one strand of the AT-rich DNA unwinding element (DUE), permitting loading of DNA polymerase. After initiation quickly degrades to an ADP-DnaA complex that is not apt for DNA replication. Binds acidic phospholipids. The sequence is that of Chromosomal replication initiator protein DnaA from Leptospira interrogans serogroup Icterohaemorrhagiae serovar copenhageni (strain Fiocruz L1-130).